The sequence spans 199 residues: V-type proton ATPase subunit E (199 aa).

Belongs to the V-ATPase E subunit family.

Functionally, produces ATP from ADP in the presence of a proton gradient across the membrane. The sequence is that of V-type proton ATPase subunit E from Clostridium botulinum (strain Okra / Type B1).